The chain runs to 153 residues: Endoribonuclease YbeY (153 aa).

His-118, His-122, and His-128 together coordinate Zn(2+).

This sequence belongs to the endoribonuclease YbeY family. Zn(2+) serves as cofactor.

The protein resides in the cytoplasm. Functionally, single strand-specific metallo-endoribonuclease involved in late-stage 70S ribosome quality control and in maturation of the 3' terminus of the 16S rRNA. This is Endoribonuclease YbeY from Staphylococcus saprophyticus subsp. saprophyticus (strain ATCC 15305 / DSM 20229 / NCIMB 8711 / NCTC 7292 / S-41).